Consider the following 319-residue polypeptide: tRNA-cytidine(32) 2-sulfurtransferase (319 aa).

Residues 43-48 carry the PP-loop motif motif; it reads SGGKDS. [4Fe-4S] cluster is bound by residues Cys118, Cys121, and Cys209.

It belongs to the TtcA family. In terms of assembly, homodimer. The cofactor is Mg(2+). Requires [4Fe-4S] cluster as cofactor.

The protein resides in the cytoplasm. The enzyme catalyses cytidine(32) in tRNA + S-sulfanyl-L-cysteinyl-[cysteine desulfurase] + AH2 + ATP = 2-thiocytidine(32) in tRNA + L-cysteinyl-[cysteine desulfurase] + A + AMP + diphosphate + H(+). The protein operates within tRNA modification. Its function is as follows. Catalyzes the ATP-dependent 2-thiolation of cytidine in position 32 of tRNA, to form 2-thiocytidine (s(2)C32). The sulfur atoms are provided by the cysteine/cysteine desulfurase (IscS) system. The chain is tRNA-cytidine(32) 2-sulfurtransferase from Neisseria meningitidis serogroup C (strain 053442).